A 230-amino-acid polypeptide reads, in one-letter code: Ubiquitin carboxyl-terminal hydrolase isozyme L3 (230 aa).

Residues 5 to 229 (RWLPLEANPE…LRFNAIALSA (225 aa)) form the UCH catalytic domain. Residues 8-13 (PLEANP) are interaction with ubiquitin. Cys-95 acts as the Nucleophile in catalysis. Residue Ser-130 is modified to Phosphoserine. Positions 152-159 (AHEGQTEA) are interaction with ubiquitin. Crossover loop which restricts access of large ubiquitin adducts to the active site. His-169 acts as the Proton donor in catalysis. Residues 219–224 (ELRFNA) form an interaction with ubiquitin region.

Belongs to the peptidase C12 family. Preferentially binds diubiquitin; the interaction does not hydrolyze diubiquitin but, in vitro, inhibits the hydrolyzing activity on other substrates. As to expression, ubiquitously expressed, with highest levels in brain, liver, heart, thymus, kidney and testis. Highly expressed in the cauda epididymidis, in meiotic pachytene spermatocytes and post-meiotic spematids. In the retina, enriched in the photoreceptor inner segment.

It localises to the cytoplasm. The enzyme catalyses Thiol-dependent hydrolysis of ester, thioester, amide, peptide and isopeptide bonds formed by the C-terminal Gly of ubiquitin (a 76-residue protein attached to proteins as an intracellular targeting signal).. With respect to regulation, inhibited by monoubiquitin and diubiquitin. Deubiquitinating enzyme (DUB) that controls levels of cellular ubiquitin through processing of ubiquitin precursors and ubiquitinated proteins. Thiol protease that recognizes and hydrolyzes a peptide bond at the C-terminal glycine of either ubiquitin or NEDD8. Has a 10-fold preference for Arg and Lys at position P3'', and exhibits a preference towards 'Lys-48'-linked ubiquitin chains. Deubiquitinates ENAC in apical compartments, thereby regulating apical membrane recycling. Indirectly increases the phosphorylation of IGFIR, AKT and FOXO1 and promotes insulin-signaling and insulin-induced adipogenesis. Required for stress-response retinal, skeletal muscle and germ cell maintenance. May be involved in working memory. Can hydrolyze UBB(+1), a mutated form of ubiquitin which is not effectively degraded by the proteasome. This Mus musculus (Mouse) protein is Ubiquitin carboxyl-terminal hydrolase isozyme L3 (Uchl3).